A 144-amino-acid polypeptide reads, in one-letter code: Protein SprT-like (144 aa).

The 140-residue stretch at 4 to 143 (NKYVQEVSLQ…GKCRGKLTLK (140 aa)) folds into the SprT-like domain. H64 serves as a coordination point for Zn(2+). E65 is a catalytic residue. H68 is a binding site for Zn(2+).

This sequence belongs to the SprT family. The cofactor is Zn(2+).

The protein localises to the cytoplasm. This Streptococcus suis (strain 98HAH33) protein is Protein SprT-like.